We begin with the raw amino-acid sequence, 20 residues long: Putative phosphoglycerate kinase (20 aa).

This sequence belongs to the phosphoglycerate kinase family. Monomer.

It localises to the cytoplasm. The catalysed reaction is (2R)-3-phosphoglycerate + ATP = (2R)-3-phospho-glyceroyl phosphate + ADP. It participates in carbohydrate degradation; glycolysis; pyruvate from D-glyceraldehyde 3-phosphate: step 2/5. This chain is Putative phosphoglycerate kinase (pgk), found in Clostridium pasteurianum.